The primary structure comprises 610 residues: Membrane protein insertase YidC (610 aa).

Residues 7–27 traverse the membrane as a helical segment; it reads FFITIALSILILALWQVFYLG. The tract at residues 36–82 is disordered; it reads QARIEEQQRQAQQAAQNRQASSSTGDTPQMPANPDSIPGQGDTKAAG. The span at 44–55 shows a compositional bias: low complexity; sequence RQAQQAAQNRQA. Helical transmembrane passes span 358–378, 387–407, 458–478, 510–530, and 546–566; these read FDLL…FYLI, NFGV…FPLA, WPVL…YVTI, TVPH…IMFL, and IFTW…AGLV.

Belongs to the OXA1/ALB3/YidC family. Type 1 subfamily. Interacts with the Sec translocase complex via SecD. Specifically interacts with transmembrane segments of nascent integral membrane proteins during membrane integration.

The protein resides in the cell inner membrane. Functionally, required for the insertion and/or proper folding and/or complex formation of integral membrane proteins into the membrane. Involved in integration of membrane proteins that insert both dependently and independently of the Sec translocase complex, as well as at least some lipoproteins. Aids folding of multispanning membrane proteins. This is Membrane protein insertase YidC from Brucella melitensis biotype 1 (strain ATCC 23456 / CCUG 17765 / NCTC 10094 / 16M).